Reading from the N-terminus, the 162-residue chain is Large ribosomal subunit protein eL24 (162 aa).

2 disordered regions span residues 64–83 (DIHA…PYSR) and 117–162 (ERIK…GGKR). Over residues 71-81 (KKRRRTTKKPY) the composition is skewed to basic residues. Basic and acidic residues predominate over residues 117–135 (ERIKKTKDEKKAKKAEVTK).

This sequence belongs to the eukaryotic ribosomal protein eL24 family.

Its subcellular location is the cytoplasm. This is Large ribosomal subunit protein eL24 (RPL24) from Hordeum vulgare (Barley).